The sequence spans 196 residues: DNA polymerase epsilon subunit D (196 aa).

The interval 125–196 (RKKEKLDSGE…ETRVQNLEQT (72 aa)) is disordered. Positions 133–143 (GEVDADGDIDM) are enriched in acidic residues. Residues 144 to 159 (GEDKENVPVEKVKEHD) are compositionally biased toward basic and acidic residues. The segment covering 160–173 (EIEEQGDALQDVEE) has biased composition (acidic residues). The segment covering 174–188 (SSEKKQKTESQDVET) has biased composition (basic and acidic residues). The residue at position 183 (Ser-183) is a Phosphoserine; by ATM or ATR.

DNA polymerase epsilon is a heterotetramer consisting of POL2, DPB2, DPB3 and DPB4. Component of the ISW2 complex, which at least consists of ISW2, ITC1, DLS1 and DPB4.

Its subcellular location is the nucleus. In terms of biological role, as accessory component of the DNA polymerase epsilon (DNA polymerase II) participates in chromosomal DNA replication. It is required during synthesis of the leading and lagging DNA strands at the replication fork and binds at/or near replication origins and moves along DNA with the replication fork. It has 3'-5' proofreading exonuclease activity that correct errors arising during DNA replication. It is also involved in DNA synthesis during DNA repair. Also functions as a component of the ISW2 complex, which acts in remodeling the chromatin by catalyzing an ATP-dependent alteration in the structure of nucleosomal DNA. The ISW2 complex is involved in coordinating transcriptional repression and in inheritance of telomeric silencing. It is involved in repression of MAT a-specific genes, INO1, and early meiotic genes during mitotic growth dependent upon transcription factor UME6 and in a parallel pathway to the RPD3-SIN3 histone deacetylase complex. This chain is DNA polymerase epsilon subunit D (DPB4), found in Saccharomyces cerevisiae (strain ATCC 204508 / S288c) (Baker's yeast).